The following is a 218-amino-acid chain: Adenylate kinase (218 aa).

10 to 15 (GAGKGT) is an ATP binding site. Positions 30–59 (STGDMLRAAVKEGSELGLKVKEIMNSGGLV) are NMP. Residues Thr-31, Arg-36, 57-59 (GLV), 85-88 (GFPR), and Gln-92 contribute to the AMP site. Positions 122 to 159 (GRRVHPGSGRVYHVDYNPPKEEGKDDVTGEALIQRDDD) are LID. Residues Arg-123 and 132-133 (VY) contribute to the ATP site. AMP is bound by residues Arg-156 and Arg-167. Gly-203 is an ATP binding site.

It belongs to the adenylate kinase family. In terms of assembly, monomer.

The protein resides in the cytoplasm. The enzyme catalyses AMP + ATP = 2 ADP. The protein operates within purine metabolism; AMP biosynthesis via salvage pathway; AMP from ADP: step 1/1. In terms of biological role, catalyzes the reversible transfer of the terminal phosphate group between ATP and AMP. Plays an important role in cellular energy homeostasis and in adenine nucleotide metabolism. This Chromohalobacter salexigens (strain ATCC BAA-138 / DSM 3043 / CIP 106854 / NCIMB 13768 / 1H11) protein is Adenylate kinase.